We begin with the raw amino-acid sequence, 210 residues long: Large ribosomal subunit protein uL4 (210 aa).

The disordered stretch occupies residues 46–85 (QGTASTLTRSEVRGGGRKPYKQKGTGRARQGSIRTPLRPG). Basic residues predominate over residues 60-71 (GGRKPYKQKGTG).

This sequence belongs to the universal ribosomal protein uL4 family. Part of the 50S ribosomal subunit.

In terms of biological role, one of the primary rRNA binding proteins, this protein initially binds near the 5'-end of the 23S rRNA. It is important during the early stages of 50S assembly. It makes multiple contacts with different domains of the 23S rRNA in the assembled 50S subunit and ribosome. Functionally, forms part of the polypeptide exit tunnel. This is Large ribosomal subunit protein uL4 from Prochlorococcus marinus (strain AS9601).